Here is a 496-residue protein sequence, read N- to C-terminus: Lysine--tRNA ligase (496 aa).

Positions 409 and 416 each coordinate Mg(2+).

This sequence belongs to the class-II aminoacyl-tRNA synthetase family. As to quaternary structure, homodimer. It depends on Mg(2+) as a cofactor.

Its subcellular location is the cytoplasm. It carries out the reaction tRNA(Lys) + L-lysine + ATP = L-lysyl-tRNA(Lys) + AMP + diphosphate. This Streptococcus pneumoniae serotype 19F (strain G54) protein is Lysine--tRNA ligase.